A 378-amino-acid polypeptide reads, in one-letter code: Transmembrane 6 superfamily member 2 (378 aa).

10 consecutive transmembrane segments (helical) span residues 10–30 (TVAM…VSAF), 34–54 (LFVV…VYSL), 63–83 (PLYA…VIAL), 110–130 (IFIC…MAGA), 140–160 (LGLY…PGNI), 170–190 (PTFF…VRIF), 219–239 (LALI…GLVV), 269–289 (MLMY…ALAF), 291–311 (GCSW…QAQF), and 332–352 (TWAT…LLAF). 2 consecutive EXPERA domains span residues 61–186 (YDPL…CWAG) and 217–351 (ADLA…HLLA).

Belongs to the TM6SF family. In terms of tissue distribution, highly expressed in the liver at both the mRNA and protein levels.

It is found in the endoplasmic reticulum membrane. The protein resides in the endoplasmic reticulum-Golgi intermediate compartment membrane. Regulator of liver fat metabolism influencing triglyceride secretion and hepatic lipid droplet content. May function as sterol isomerase. This is Transmembrane 6 superfamily member 2 (Tm6sf2) from Mus musculus (Mouse).